A 499-amino-acid chain; its full sequence is Glycerol kinase (499 aa).

ADP is bound at residue Thr17. The ATP site is built by Thr17, Thr18, and Ser19. Sn-glycerol 3-phosphate is bound at residue Thr17. Arg21 is an ADP binding site. Sn-glycerol 3-phosphate-binding residues include Arg87, Glu88, Tyr139, and Asp243. 5 residues coordinate glycerol: Arg87, Glu88, Tyr139, Asp243, and Gln244. ADP is bound by residues Thr265 and Gly308. The ATP site is built by Thr265, Gly308, Gln312, and Gly409. Positions 409 and 413 each coordinate ADP.

Belongs to the FGGY kinase family.

The catalysed reaction is glycerol + ATP = sn-glycerol 3-phosphate + ADP + H(+). The protein operates within polyol metabolism; glycerol degradation via glycerol kinase pathway; sn-glycerol 3-phosphate from glycerol: step 1/1. Its activity is regulated as follows. Inhibited by fructose 1,6-bisphosphate (FBP). In terms of biological role, key enzyme in the regulation of glycerol uptake and metabolism. Catalyzes the phosphorylation of glycerol to yield sn-glycerol 3-phosphate. This Pseudomonas putida (strain ATCC 700007 / DSM 6899 / JCM 31910 / BCRC 17059 / LMG 24140 / F1) protein is Glycerol kinase.